Reading from the N-terminus, the 322-residue chain is MSPNFKLQCHFILILLTALRGESRYLEVQEAAVYDPLLLFSANLKRDLAEEQPYRRALRCLDMLSLPGQFTFTADRPQLHCAAFFIGEPEEFITIHYDLVSIDCQGGDFLKVFDGWILKGEKFPSSQDHPLPTMKRYTDFCESGLTRRSIRSSQNVAMVFFRVHEPGNGFTITIKTDPNLFPCNVISQTPSGRFTLVVPYQHQNCSFSIIYPVAIKISDLTLGHLHGLQLKKPAAGCGGTGDFVELLGGTGLDPSKMMPLADLCYPFLGPAQMKISCDNAVVRMVSSGKHINRVTFEYRQLEPFELETSTGNSIPEYCLSSL.

Positions 1 to 24 (MSPNFKLQCHFILILLTALRGESR) are cleaved as a signal peptide. 5 disulfides stabilise this stretch: C60–C81, C104–C141, C183–C205, C237–C264, and C277–C318. An N-linked (GlcNAc...) asparagine glycan is attached at N204.

The protein belongs to the CRF-binding protein family.

It is found in the secreted. In terms of biological role, binds CRF and inactivates it. May prevent inappropriate pituitary-adrenal stimulation in pregnancy. The chain is Corticotropin-releasing factor-binding protein (Crhbp) from Mus musculus (Mouse).